Consider the following 335-residue polypeptide: Holliday junction branch migration complex subunit RuvB (335 aa).

Positions 1–181 (MDRIVEIEKY…FGMQFRLEFY (181 aa)) are large ATPase domain (RuvB-L). L20 is a binding site for ATP. Residues R21, Y28, I29, G62, L63, G64, K65, T66, and T67 each contribute to the ADP site. ATP is bound by residues 128 to 130 (EDY) and R171. Residues Y181 and R218 each contribute to the ADP site. A small ATPAse domain (RuvB-S) region spans residues 182-252 (KDSELALILQ…RANEALNSLG (71 aa)). The interval 255–335 (ELGFDAMDLR…LNYEKTLFEE (81 aa)) is head domain (RuvB-H). DNA is bound by residues R309 and R314.

This sequence belongs to the RuvB family. As to quaternary structure, homohexamer. Forms an RuvA(8)-RuvB(12)-Holliday junction (HJ) complex. HJ DNA is sandwiched between 2 RuvA tetramers; dsDNA enters through RuvA and exits via RuvB. An RuvB hexamer assembles on each DNA strand where it exits the tetramer. Each RuvB hexamer is contacted by two RuvA subunits (via domain III) on 2 adjacent RuvB subunits; this complex drives branch migration. In the full resolvosome a probable DNA-RuvA(4)-RuvB(12)-RuvC(2) complex forms which resolves the HJ.

The protein resides in the cytoplasm. The enzyme catalyses ATP + H2O = ADP + phosphate + H(+). The RuvA-RuvB-RuvC complex processes Holliday junction (HJ) DNA during genetic recombination and DNA repair, while the RuvA-RuvB complex plays an important role in the rescue of blocked DNA replication forks via replication fork reversal (RFR). RuvA specifically binds to HJ cruciform DNA, conferring on it an open structure. The RuvB hexamer acts as an ATP-dependent pump, pulling dsDNA into and through the RuvAB complex. RuvB forms 2 homohexamers on either side of HJ DNA bound by 1 or 2 RuvA tetramers; 4 subunits per hexamer contact DNA at a time. Coordinated motions by a converter formed by DNA-disengaged RuvB subunits stimulates ATP hydrolysis and nucleotide exchange. Immobilization of the converter enables RuvB to convert the ATP-contained energy into a lever motion, pulling 2 nucleotides of DNA out of the RuvA tetramer per ATP hydrolyzed, thus driving DNA branch migration. The RuvB motors rotate together with the DNA substrate, which together with the progressing nucleotide cycle form the mechanistic basis for DNA recombination by continuous HJ branch migration. Branch migration allows RuvC to scan DNA until it finds its consensus sequence, where it cleaves and resolves cruciform DNA. This chain is Holliday junction branch migration complex subunit RuvB, found in Campylobacter jejuni subsp. jejuni serotype O:2 (strain ATCC 700819 / NCTC 11168).